We begin with the raw amino-acid sequence, 816 residues long: MLSQGEILRNPSRTRLQRPPKSRSERKGWWYRVTIFLTCLIPNFMLRCFGMTTPEVQHAWREKVALCICIFFCWIILGFTTYGMNTIICKGSNQYVASRLKRDAFDGNTVIANGGIYYTDDEYAFGENHTYAFEKKSGACKLAFGRQLPSGDEDIDDLERINDIYWDWGDIMSKGMIVVGNKVYDPSYCTEPLFEEFNRKYAGTEGKPDFDTDEWRCYEDMFYAGKVATKTPGCLLADTMFWITTISIFGLIITKFLLGFFYSWYAKRRPKPSPKITPCILLVTCYSEGKDGIKNTLDSLCKQDYGYDYKLIVVICDGNITGSGNSMSTPDIVLGLSDVDRRAEPKGYISLTHGTKRYNRAKVHAGYYHVREEKKSRRYRCWPCFGRQADSSEVENYKTRILVINKCGNPSETFKAGNRGKRDSQVILMSFFSKLIYGDRMTELDFEIYQKMKFLMPHIEPEDFECILMVDADTIVKPDALSIMVNVFETDQKVIGMCGETMILNKFESWVTMIQVFEYYISHHLSKAFESVFGGVTCLPGCFCMYRIKIVTNQQGQLLSGPSKSRASVPRFSSMKSILSSSLEKSLCLPILANPAIINAYSVLEVKTLHQKNLLHLGEDRYLTTLLLKTFYRRKLVFIPAAKCETYVPGEFSVLLSQRRRWINSTIHNLFELVQVNNLCGAFCFSMQLVVVMELFGTLVLPAAIIFTFVMIAVSILIEPAWVPLIMLVGIFGLPAVLILITTMEIQYVFWCLVYILSIPIWNFVLPTYAFWHFDNFSWGDTRKVDGEGKEDEEGEFDHTKIRIRELEEFLSEANK.

Residues 1–21 form a disordered region; sequence MLSQGEILRNPSRTRLQRPPK. The Cytoplasmic segment spans residues 1 to 32; the sequence is MLSQGEILRNPSRTRLQRPPKSRSERKGWWYR. The chain crosses the membrane as a helical span at residues 33 to 53; it reads VTIFLTCLIPNFMLRCFGMTT. The Extracellular portion of the chain corresponds to 54 to 63; the sequence is PEVQHAWREK. Residues 64–84 form a helical membrane-spanning segment; sequence VALCICIFFCWIILGFTTYGM. Residues 85–240 are Cytoplasmic-facing; it reads NTIICKGSNQ…TPGCLLADTM (156 aa). A helical membrane pass occupies residues 241 to 261; that stretch reads FWITTISIFGLIITKFLLGFF. Residues 262 to 697 are Extracellular-facing; that stretch reads YSWYAKRRPK…QLVVVMELFG (436 aa). Asn319 and Asn664 each carry an N-linked (GlcNAc...) asparagine glycan. A helical transmembrane segment spans residues 698–718; it reads TLVLPAAIIFTFVMIAVSILI. Residues 719–720 are Cytoplasmic-facing; the sequence is EP. The chain crosses the membrane as a helical span at residues 721 to 741; sequence AWVPLIMLVGIFGLPAVLILI. Residues 742–745 lie on the Extracellular side of the membrane; that stretch reads TTME. The chain crosses the membrane as a helical span at residues 746-766; sequence IQYVFWCLVYILSIPIWNFVL. Residues 767–816 are Cytoplasmic-facing; it reads PTYAFWHFDNFSWGDTRKVDGEGKEDEEGEFDHTKIRIRELEEFLSEANK.

This sequence belongs to the chitin synthase family. Class IV subfamily.

Its subcellular location is the cell membrane. It carries out the reaction [(1-&gt;4)-N-acetyl-beta-D-glucosaminyl](n) + UDP-N-acetyl-alpha-D-glucosamine = [(1-&gt;4)-N-acetyl-beta-D-glucosaminyl](n+1) + UDP + H(+). Functionally, polymerizes chitin, a structural polymer of the cell wall and septum, by transferring the sugar moiety of UDP-GlcNAc to the non-reducing end of the growing chitin polymer. In Encephalitozoon cuniculi (strain GB-M1) (Microsporidian parasite), this protein is Chitin synthase 1 (CHS1).